Here is a 263-residue protein sequence, read N- to C-terminus: HTH-type transcriptional repressor NanR (263 aa).

The disordered stretch occupies residues 1 to 25 (MDVMNAFDSQAEDSPTSLGRSLRRR). The HTH gntR-type domain occupies 30-98 (KKLSEMVEEE…NGERARVSRP (69 aa)). A DNA-binding region (H-T-H motif) is located at residues 58 to 77 (ERELMAFFNVGRPSVREALA).

Belongs to the NanR family.

Its function is as follows. Transcriptional repressor that controls expression of the genes required for the catabolism of sialic acids. The sequence is that of HTH-type transcriptional repressor NanR from Salmonella schwarzengrund (strain CVM19633).